The chain runs to 854 residues: Rod cGMP-specific 3',5'-cyclic phosphodiesterase subunit beta (854 aa).

Residue Ser2 is modified to N-acetylserine. 2 consecutive GAF domains span residues 71-220 (NMER…TLYL) and 252-429 (DIER…GWSV). A PDEase domain is found at 481-814 (DEDELGEILK…KEWKALADEY (334 aa)). His557 acts as the Proton donor in catalysis. Residues His561, His597, Asp598, and Asp718 each coordinate a divalent metal cation. The S-geranylgeranyl cysteine moiety is linked to residue Cys851. The propeptide at 852 to 854 (CIL) is removed in mature form.

It belongs to the cyclic nucleotide phosphodiesterase family. Oligomer composed of two catalytic chains (alpha and beta), an inhibitory chain (gamma) and the delta chain. A divalent metal cation serves as cofactor.

The protein localises to the membrane. Its subcellular location is the cell projection. The protein resides in the cilium. It localises to the photoreceptor outer segment. The catalysed reaction is 3',5'-cyclic GMP + H2O = GMP + H(+). Rod-specific cGMP phosphodiesterase that catalyzes the hydrolysis of 3',5'-cyclic GMP. Necessary for the formation of a functional phosphodiesterase holoenzyme. Involved in retinal circadian rhythm photoentrainment via modulation of UVA and orange light-induced phase-shift of the retina clock. May participate in processes of transmission and amplification of the visual signal. The protein is Rod cGMP-specific 3',5'-cyclic phosphodiesterase subunit beta of Homo sapiens (Human).